The sequence spans 294 residues: 4-hydroxy-tetrahydrodipicolinate synthase (294 aa).

A pyruvate-binding site is contributed by T44. Catalysis depends on Y132, which acts as the Proton donor/acceptor. K161 (schiff-base intermediate with substrate) is an active-site residue. Residue I203 participates in pyruvate binding.

It belongs to the DapA family. Homotetramer; dimer of dimers.

It localises to the cytoplasm. It carries out the reaction L-aspartate 4-semialdehyde + pyruvate = (2S,4S)-4-hydroxy-2,3,4,5-tetrahydrodipicolinate + H2O + H(+). It functions in the pathway amino-acid biosynthesis; L-lysine biosynthesis via DAP pathway; (S)-tetrahydrodipicolinate from L-aspartate: step 3/4. In terms of biological role, catalyzes the condensation of (S)-aspartate-beta-semialdehyde [(S)-ASA] and pyruvate to 4-hydroxy-tetrahydrodipicolinate (HTPA). This is 4-hydroxy-tetrahydrodipicolinate synthase from Aquifex aeolicus (strain VF5).